Here is a 185-residue protein sequence, read N- to C-terminus: Potassium-transporting ATPase KdpC subunit 2 (185 aa).

The helical transmembrane segment at 8–28 threads the bilayer; the sequence is LGLVLIMFVLCGFIFPLTVTA.

It belongs to the KdpC family. In terms of assembly, the system is composed of three essential subunits: KdpA, KdpB and KdpC.

It is found in the cell membrane. Its subcellular location is the membrane raft. In terms of biological role, part of the high-affinity ATP-driven potassium transport (or Kdp) system, which catalyzes the hydrolysis of ATP coupled with the electrogenic transport of potassium into the cytoplasm. This subunit acts as a catalytic chaperone that increases the ATP-binding affinity of the ATP-hydrolyzing subunit KdpB by the formation of a transient KdpB/KdpC/ATP ternary complex. This chain is Potassium-transporting ATPase KdpC subunit 2, found in Staphylococcus aureus (strain Mu50 / ATCC 700699).